Consider the following 264-residue polypeptide: Octanoyltransferase (264 aa).

Positions 74–262 (GTASELVWLV…AFESVFGPRQ (189 aa)) constitute a BPL/LPL catalytic domain. Residues 113–120 (RGGEYTYH), 193–195 (AIG), and 206–208 (GIA) each bind substrate. The active-site Acyl-thioester intermediate is C224.

The protein belongs to the LipB family.

It is found in the cytoplasm. The enzyme catalyses octanoyl-[ACP] + L-lysyl-[protein] = N(6)-octanoyl-L-lysyl-[protein] + holo-[ACP] + H(+). It participates in protein modification; protein lipoylation via endogenous pathway; protein N(6)-(lipoyl)lysine from octanoyl-[acyl-carrier-protein]: step 1/2. Catalyzes the transfer of endogenously produced octanoic acid from octanoyl-acyl-carrier-protein onto the lipoyl domains of lipoate-dependent enzymes. Lipoyl-ACP can also act as a substrate although octanoyl-ACP is likely to be the physiological substrate. This Brucella melitensis biotype 1 (strain ATCC 23456 / CCUG 17765 / NCTC 10094 / 16M) protein is Octanoyltransferase.